A 310-amino-acid chain; its full sequence is Dopamine receptor-interacting protein 1 (310 aa).

As to quaternary structure, interacts with DRD1.

Its function is as follows. Could be a regulator of the dopamine receptor signaling pathway. The sequence is that of Dopamine receptor-interacting protein 1 from Homo sapiens (Human).